A 311-amino-acid chain; its full sequence is Terpentetriene synthase (311 aa).

Residues 77–81 (DDRWD) carry the DDXXD motif motif.

Belongs to the terpene synthase family. Homodimer. Mg(2+) serves as cofactor.

It carries out the reaction terpentedienyl diphosphate = terpentetriene + diphosphate. It functions in the pathway antibiotic biosynthesis. Its function is as follows. Involved in the production of the isoprenoid antibiotic terpentecin. Converts terpentedienol diphosphate (TDP) into terpentetriene (TTE). Can also accept geranylgeranyl diphosphate (GGDP) and farnesyl diphosphate (FDP) as substrates. The protein is Terpentetriene synthase (cyc2) of Kitasatospora griseola (Streptomyces griseolosporeus).